A 580-amino-acid polypeptide reads, in one-letter code: Arginine--tRNA ligase (580 aa).

A 'HIGH' region motif is present at residues 127–137; the sequence is PNLAKEMHVGH.

The protein belongs to the class-I aminoacyl-tRNA synthetase family. In terms of assembly, monomer.

Its subcellular location is the cytoplasm. It catalyses the reaction tRNA(Arg) + L-arginine + ATP = L-arginyl-tRNA(Arg) + AMP + diphosphate. The protein is Arginine--tRNA ligase of Idiomarina loihiensis (strain ATCC BAA-735 / DSM 15497 / L2-TR).